The primary structure comprises 357 residues: Nicotinate-nucleotide--dimethylbenzimidazole phosphoribosyltransferase (357 aa).

E323 functions as the Proton acceptor in the catalytic mechanism.

Belongs to the CobT family.

The enzyme catalyses 5,6-dimethylbenzimidazole + nicotinate beta-D-ribonucleotide = alpha-ribazole 5'-phosphate + nicotinate + H(+). The protein operates within nucleoside biosynthesis; alpha-ribazole biosynthesis; alpha-ribazole from 5,6-dimethylbenzimidazole: step 1/2. Its function is as follows. Catalyzes the synthesis of alpha-ribazole-5'-phosphate from nicotinate mononucleotide (NAMN) and 5,6-dimethylbenzimidazole (DMB). This Nitratidesulfovibrio vulgaris (strain DP4) (Desulfovibrio vulgaris) protein is Nicotinate-nucleotide--dimethylbenzimidazole phosphoribosyltransferase.